The primary structure comprises 288 residues: Phenazine biosynthesis-like domain-containing protein (288 aa).

Residue E46 is part of the active site.

It belongs to the PhzF family. Interacts with UNRIP/MAWD.

This Rattus norvegicus (Rat) protein is Phenazine biosynthesis-like domain-containing protein (Pbld).